The following is a 305-amino-acid chain: UDP-N-acetylenolpyruvoylglucosamine reductase (305 aa).

The 180-residue stretch at 35–214 (VGGPAQALFT…RARMNEVQAH (180 aa)) folds into the FAD-binding PCMH-type domain. R179 is a catalytic residue. S228 functions as the Proton donor in the catalytic mechanism. The active site involves E298.

Belongs to the MurB family. It depends on FAD as a cofactor.

It localises to the cytoplasm. It carries out the reaction UDP-N-acetyl-alpha-D-muramate + NADP(+) = UDP-N-acetyl-3-O-(1-carboxyvinyl)-alpha-D-glucosamine + NADPH + H(+). Its pathway is cell wall biogenesis; peptidoglycan biosynthesis. Its function is as follows. Cell wall formation. The chain is UDP-N-acetylenolpyruvoylglucosamine reductase from Nitrobacter winogradskyi (strain ATCC 25391 / DSM 10237 / CIP 104748 / NCIMB 11846 / Nb-255).